The primary structure comprises 370 residues: Zinc finger protein 830 (370 aa).

Disordered stretches follow at residues 1 to 21 (MASS…QEEL) and 75 to 220 (HRER…LVPH). Ala2 bears the N-acetylalanine mark. A coiled-coil region spans residues 16–40 (VNQEELRRLMKEKQRLSTNRKRIES). A C2H2-type zinc finger spans residues 53-75 (CALCNTPVKSELLWQTHVLGKQH). The span at 90 to 99 (QGPSAGTAPQ) shows a compositional bias: polar residues. Residues 104–115 (KTTDVESQDAKK) show a composition bias toward basic and acidic residues. The segment covering 121–134 (DQVQPSTSASSANF) has biased composition (polar residues). Over residues 156–171 (DYEEEEEEEEEEELGG) the composition is skewed to acidic residues. Basic and acidic residues predominate over residues 172-191 (GEERRDSSKHLPDAQGREHS). Positions 196–212 (RETTSNVLPNDPFNTNP) are enriched in polar residues. Phosphoserine is present on Ser223. Residues 310–338 (IECYRRVEKLRNRQDEIKNKLKEVLTIKE) are a coiled coil. 2 positions are modified to phosphoserine: Ser349 and Ser360.

As to quaternary structure, component of the XAB2 complex, a multimeric protein complex composed of XAB2, PRPF19, AQR, ZNF830, ISY1, and PPIE; this complex binds preferentially to RNA. Interacts with XAB2. Identified in a pentameric intron-binding (IB) complex composed of AQR, XAB2, ISY1, ZNF830 and PPIE that is incorporated into the spliceosome as a preassembled complex. The IB complex does not contain PRPF19. Post-translationally, phosphorylated in response to DNA damage by the cell cycle checkpoint kinases ATR/ATM.

The protein localises to the nucleus. It localises to the chromosome. It is found in the nucleus speckle. May play a role in pre-mRNA splicing as component of the spliceosome. Acts as an important regulator of the cell cycle that participates in the maintenance of genome integrity. During cell cycle progression in embryonic fibroblast, prevents replication fork collapse, double-strand break formation and cell cycle checkpoint activation. Controls mitotic cell cycle progression and cell survival in rapidly proliferating intestinal epithelium and embryonic stem cells. During the embryo preimplantation, controls different aspects of M phase. During early oocyte growth, plays a role in oocyte survival by preventing chromosomal breaks formation, activation of TP63 and reduction of transcription. The sequence is that of Zinc finger protein 830 from Rattus norvegicus (Rat).